The sequence spans 59 residues: U-myrmeciitoxin(01)-Mg5b (59 aa).

Residues Met1–Ala21 form the signal peptide. A propeptide spanning residues Ser22–Gly38 is cleaved from the precursor.

As to expression, expressed by the venom gland.

Its subcellular location is the secreted. Its function is as follows. May have antimicrobial properties, like most ant linear peptides. This Myrmecia gulosa (Red bulldog ant) protein is U-myrmeciitoxin(01)-Mg5b.